A 407-amino-acid chain; its full sequence is Methylthioribose-1-phosphate isomerase (407 aa).

Aspartate 275 functions as the Proton donor in the catalytic mechanism.

This sequence belongs to the eIF-2B alpha/beta/delta subunits family. MtnA subfamily.

Its subcellular location is the cytoplasm. The protein resides in the nucleus. It catalyses the reaction 5-(methylsulfanyl)-alpha-D-ribose 1-phosphate = 5-(methylsulfanyl)-D-ribulose 1-phosphate. It participates in amino-acid biosynthesis; L-methionine biosynthesis via salvage pathway; L-methionine from S-methyl-5-thio-alpha-D-ribose 1-phosphate: step 1/6. Functionally, catalyzes the interconversion of methylthioribose-1-phosphate (MTR-1-P) into methylthioribulose-1-phosphate (MTRu-1-P). In Kluyveromyces lactis (strain ATCC 8585 / CBS 2359 / DSM 70799 / NBRC 1267 / NRRL Y-1140 / WM37) (Yeast), this protein is Methylthioribose-1-phosphate isomerase.